Here is a 390-residue protein sequence, read N- to C-terminus: Pyruvate dehydrogenase E1 component subunit alpha, somatic form, mitochondrial (390 aa).

A mitochondrion-targeting transit peptide spans 1–29; it reads MRKMLAAVSRVLSGVAQKPASRVLVASRH. At Lys63 the chain carries N6-acetyllysine; alternate. The residue at position 63 (Lys63) is an N6-succinyllysine; alternate. His92, Tyr118, Arg119, Ala157, Gly165, Val167, Asp196, Gly197, Ala198, Asn225, and Tyr227 together coordinate pyruvate. The thiamine diphosphate site is built by Tyr118 and Arg119. 6 residues coordinate thiamine diphosphate: Gly165, Val167, Asp196, Gly197, Ala198, and Asn225. Asp196 provides a ligand contact to Mg(2+). Asn225 and Tyr227 together coordinate Mg(2+). Position 232 is a phosphoserine; by PDK1 (Ser232). Lys244 is subject to N6-acetyllysine; alternate. Lys244 is subject to N6-succinyllysine; alternate. Residue Lys267 is modified to N6-acetyllysine. The residue at position 277 (Lys277) is an N6-succinyllysine. Position 292 (His292) interacts with thiamine diphosphate. Ser293 is subject to Phosphoserine; by PDK1, PDK2, PDK3 and PDK4. The residue at position 295 (Ser295) is a Phosphoserine. Phosphoserine; by PDK1, PDK2, PDK3 and PDK4 is present on Ser300. Tyr301 is modified (phosphotyrosine). Position 313 is an N6-acetyllysine; alternate (Lys313). At Lys313 the chain carries N6-succinyllysine; alternate. Lys321 and Lys336 each carry N6-acetyllysine. Lys385 carries the N6-succinyllysine modification.

As to quaternary structure, heterotetramer of two PDHA1 and two PDHB subunits. The heterotetramer interacts with DLAT, and is part of the multimeric pyruvate dehydrogenase complex that contains multiple copies of pyruvate dehydrogenase (E1), dihydrolipoamide acetyltransferase (DLAT, E2) and lipoamide dehydrogenase (DLD, E3). These subunits are bound to an inner core composed of about 48 DLAT and 12 PDHX molecules. Thiamine diphosphate serves as cofactor. The cofactor is Mg(2+). Post-translationally, phosphorylation at Ser-232, Ser-293 and Ser-300 by PDK family kinases inactivates the enzyme; for this phosphorylation at a single site is sufficient. Phosphorylation at Ser-293 interferes with access to active site, and thereby inactivates the enzyme. Dephosphorylation at all three sites, i.e. at Ser-232, Ser-293 and Ser-300, is required for reactivation. Acetylation alters the phosphorylation pattern. Deacetylated by SIRT3.

The protein resides in the mitochondrion matrix. It catalyses the reaction N(6)-[(R)-lipoyl]-L-lysyl-[protein] + pyruvate + H(+) = N(6)-[(R)-S(8)-acetyldihydrolipoyl]-L-lysyl-[protein] + CO2. With respect to regulation, pyruvate dehydrogenase activity is inhibited by phosphorylation of PDHA1; it is reactivated by dephosphorylation. The pyruvate dehydrogenase complex catalyzes the overall conversion of pyruvate to acetyl-CoA and CO(2), and thereby links the glycolytic pathway to the tricarboxylic cycle. In Bos taurus (Bovine), this protein is Pyruvate dehydrogenase E1 component subunit alpha, somatic form, mitochondrial (PDHA1).